Here is a 718-residue protein sequence, read N- to C-terminus: Probable trehalose-phosphatase (718 aa).

Positions 449–470 (LSMDQTGHKKVDAKKKPGIRKK) are disordered. The segment covering 459 to 470 (VDAKKKPGIRKK) has biased composition (basic residues).

In the N-terminal section; belongs to the glycosyltransferase 20 family. The protein in the C-terminal section; belongs to the trehalose phosphatase family.

The enzyme catalyses alpha,alpha-trehalose 6-phosphate + H2O = alpha,alpha-trehalose + phosphate. The chain is Probable trehalose-phosphatase from Encephalitozoon cuniculi (strain GB-M1) (Microsporidian parasite).